Here is a 271-residue protein sequence, read N- to C-terminus: 3-methyl-2-oxobutanoate hydroxymethyltransferase (271 aa).

Asp-51 and Asp-90 together coordinate Mg(2+). 3-methyl-2-oxobutanoate is bound by residues 51-52 (DS), Asp-90, and Lys-119. A Mg(2+)-binding site is contributed by Glu-121. Glu-188 (proton acceptor) is an active-site residue.

It belongs to the PanB family. As to quaternary structure, homodecamer; pentamer of dimers. Mg(2+) serves as cofactor.

It is found in the cytoplasm. It catalyses the reaction 3-methyl-2-oxobutanoate + (6R)-5,10-methylene-5,6,7,8-tetrahydrofolate + H2O = 2-dehydropantoate + (6S)-5,6,7,8-tetrahydrofolate. The protein operates within cofactor biosynthesis; (R)-pantothenate biosynthesis; (R)-pantoate from 3-methyl-2-oxobutanoate: step 1/2. In terms of biological role, catalyzes the reversible reaction in which hydroxymethyl group from 5,10-methylenetetrahydrofolate is transferred onto alpha-ketoisovalerate to form ketopantoate. This is 3-methyl-2-oxobutanoate hydroxymethyltransferase from Azoarcus sp. (strain BH72).